The following is a 336-amino-acid chain: Urokinase plasminogen activator surface receptor (336 aa).

Residues 1–23 form the signal peptide; that stretch reads MGHPLLLPLLLLLLHTGVPASWG. UPAR/Ly6 domains lie at 24-111, 116-208, and 215-302; these read LRCM…VTFP, LECI…LSLA, and HRCY…EDIQ. 3 disulfides stabilise this stretch: C26–C47, C29–C35, and C40–C68. A glycan (N-linked (GlcNAc...) asparagine) is linked at N75. 11 cysteine pairs are disulfide-bonded: C94-C99, C118-C145, C121-C128, C138-C170, C176-C193, C194-C199, C217-C245, C220-C228, C238-C264, C270-C288, and C289-C294. Residues N195 and N223 are each glycosylated (N-linked (GlcNAc...) asparagine).

Monomer. Interacts (via the UPAR/Ly6 domains) with SRPX2. Interacts with MRC2. Interacts with FAP (seprase); the interaction occurs at the cell surface of invadopodia membrane. Interacts with SORL1 (via N-terminal ectodomain); this interaction decreases PLAUR internalization. The ternary complex composed of PLAUR-PLAU-SERPINE1 also interacts with SORL1.

Its subcellular location is the cell membrane. The protein localises to the cell projection. The protein resides in the invadopodium membrane. Functionally, acts as a receptor for urokinase plasminogen activator. Plays a role in localizing and promoting plasmin formation. Mediates the proteolysis-independent signal transduction activation effects of U-PA. It is subject to negative-feedback regulation by U-PA which cleaves it into an inactive form. The polypeptide is Urokinase plasminogen activator surface receptor (PLAUR) (Aotus trivirgatus (Three-striped night monkey)).